Consider the following 40-residue polypeptide: Photosystem II reaction center protein J (40 aa).

A helical membrane pass occupies residues 8–28 (IPLWLIGTVTGIIVIGLIGIF).

Belongs to the PsbJ family. In terms of assembly, PSII is composed of 1 copy each of membrane proteins PsbA, PsbB, PsbC, PsbD, PsbE, PsbF, PsbH, PsbI, PsbJ, PsbK, PsbL, PsbM, PsbT, PsbX, PsbY, PsbZ, Psb30/Ycf12, at least 3 peripheral proteins of the oxygen-evolving complex and a large number of cofactors. It forms dimeric complexes.

It localises to the plastid. It is found in the chloroplast thylakoid membrane. Its function is as follows. One of the components of the core complex of photosystem II (PSII). PSII is a light-driven water:plastoquinone oxidoreductase that uses light energy to abstract electrons from H(2)O, generating O(2) and a proton gradient subsequently used for ATP formation. It consists of a core antenna complex that captures photons, and an electron transfer chain that converts photonic excitation into a charge separation. This is Photosystem II reaction center protein J from Piper cenocladum (Ant piper).